The primary structure comprises 517 residues: Ribonuclease Y (517 aa).

Residues 1-21 (MIESLIALIAAIVGLGIGYLV) form a helical membrane-spanning segment. Residues 207–273 (LINVINIKND…TKVIELLVED (67 aa)) enclose the KH domain. One can recognise an HD domain in the interval 333–426 (ALAHSLEVAH…VCAADTLSAA (94 aa)).

It belongs to the RNase Y family.

It is found in the cell membrane. Functionally, endoribonuclease that initiates mRNA decay. This Campylobacter jejuni subsp. jejuni serotype O:6 (strain 81116 / NCTC 11828) protein is Ribonuclease Y.